Here is a 277-residue protein sequence, read N- to C-terminus: Large ribosomal subunit protein uL2 (277 aa).

2 disordered regions span residues 36–55 (PLPK…RHHG) and 213–277 (WKGI…RKKK).

The protein belongs to the universal ribosomal protein uL2 family. In terms of assembly, part of the 50S ribosomal subunit. Forms a bridge to the 30S subunit in the 70S ribosome.

One of the primary rRNA binding proteins. Required for association of the 30S and 50S subunits to form the 70S ribosome, for tRNA binding and peptide bond formation. It has been suggested to have peptidyltransferase activity; this is somewhat controversial. Makes several contacts with the 16S rRNA in the 70S ribosome. This chain is Large ribosomal subunit protein uL2, found in Staphylococcus saprophyticus subsp. saprophyticus (strain ATCC 15305 / DSM 20229 / NCIMB 8711 / NCTC 7292 / S-41).